The primary structure comprises 673 residues: DNA ligase (673 aa).

NAD(+) contacts are provided by residues 35–39 (DADYD), 84–85 (SL), and Glu-115. Lys-117 functions as the N6-AMP-lysine intermediate in the catalytic mechanism. NAD(+) is bound by residues Arg-138, Glu-180, Lys-296, and Lys-320. Residues Cys-415, Cys-418, Cys-433, and Cys-438 each contribute to the Zn(2+) site. Residues 595–673 (ERGTALAGQT…EDALKKLLGK (79 aa)) enclose the BRCT domain.

It belongs to the NAD-dependent DNA ligase family. LigA subfamily. It depends on Mg(2+) as a cofactor. Requires Mn(2+) as cofactor.

The catalysed reaction is NAD(+) + (deoxyribonucleotide)n-3'-hydroxyl + 5'-phospho-(deoxyribonucleotide)m = (deoxyribonucleotide)n+m + AMP + beta-nicotinamide D-nucleotide.. Functionally, DNA ligase that catalyzes the formation of phosphodiester linkages between 5'-phosphoryl and 3'-hydroxyl groups in double-stranded DNA using NAD as a coenzyme and as the energy source for the reaction. It is essential for DNA replication and repair of damaged DNA. This is DNA ligase from Koribacter versatilis (strain Ellin345).